The primary structure comprises 234 residues: Coiled-coil domain-containing protein 194 (234 aa).

The first 42 residues, 1 to 42 (MAEPGPEPGRAWRVLALCGVAVFLAAAAAGGALVAWNLAASA), serve as a signal peptide directing secretion. Disordered regions lie at residues 44–67 (RGPR…PGVD) and 187–234 (VLEA…RARG). Residues 66–163 (VDDLRRRLAE…TRRLDEALRR (98 aa)) are a coiled coil. A compositionally biased stretch (low complexity) spans 187 to 196 (VLEAEMSPQR). Over residues 197 to 217 (RVPRPRPRSGSRPRPSPRSRS) the composition is skewed to basic residues.

This chain is Coiled-coil domain-containing protein 194, found in Homo sapiens (Human).